The following is a 119-amino-acid chain: Aspartate 1-decarboxylase (119 aa).

Ser-25 (schiff-base intermediate with substrate; via pyruvic acid) is an active-site residue. Ser-25 bears the Pyruvic acid (Ser) mark. Residue Thr-57 coordinates substrate. The active-site Proton donor is Tyr-58. Residue 73 to 75 coordinates substrate; the sequence is GAA.

It belongs to the PanD family. In terms of assembly, heterooctamer of four alpha and four beta subunits. It depends on pyruvate as a cofactor. Is synthesized initially as an inactive proenzyme, which is activated by self-cleavage at a specific serine bond to produce a beta-subunit with a hydroxyl group at its C-terminus and an alpha-subunit with a pyruvoyl group at its N-terminus.

Its subcellular location is the cytoplasm. It catalyses the reaction L-aspartate + H(+) = beta-alanine + CO2. It participates in cofactor biosynthesis; (R)-pantothenate biosynthesis; beta-alanine from L-aspartate: step 1/1. Its function is as follows. Catalyzes the pyruvoyl-dependent decarboxylation of aspartate to produce beta-alanine. This chain is Aspartate 1-decarboxylase, found in Herminiimonas arsenicoxydans.